Here is an 84-residue protein sequence, read N- to C-terminus: Small ribosomal subunit protein uS17 (84 aa).

This sequence belongs to the universal ribosomal protein uS17 family. In terms of assembly, part of the 30S ribosomal subunit.

In terms of biological role, one of the primary rRNA binding proteins, it binds specifically to the 5'-end of 16S ribosomal RNA. The protein is Small ribosomal subunit protein uS17 of Moorella thermoacetica (strain ATCC 39073 / JCM 9320).